The following is a 350-amino-acid chain: C4-dicarboxylate-binding protein DctB (350 aa).

Residues 1-18 (MKSLLACLALMIAGIATA) form the signal peptide.

This sequence belongs to the bacterial solute-binding protein 7 family.

Its subcellular location is the secreted. Its function is as follows. Part of the binding-protein-dependent transport system for uptake of C4-dicarboxylates. Responsible for growth on fumarate and succinate but not malate. Is not directly involved in C4-dicarboxylate uptake, but plays a sensory role in the DctS/DctR two-component system which regulates the expression of the dctA C4-dicarboxylate transporter. This Bacillus subtilis (strain 168) protein is C4-dicarboxylate-binding protein DctB (dctB).